Reading from the N-terminus, the 1027-residue chain is Exportin-T (1027 aa).

Belongs to the exportin family.

The protein resides in the nucleus. It localises to the cytoplasm. Its function is as follows. tRNA nucleus export receptor which facilitates tRNA translocation across the nuclear pore complex. Involved in pre-tRNA splicing, probably by affecting the interaction of pre-tRNA with splicing endonuclease. This chain is Exportin-T (LOS1), found in Pyricularia oryzae (strain 70-15 / ATCC MYA-4617 / FGSC 8958) (Rice blast fungus).